Here is a 267-residue protein sequence, read N- to C-terminus: Putative phosphoenolpyruvate synthase regulatory protein (267 aa).

Residue 147-154 (GVSRSGKT) participates in ADP binding.

This sequence belongs to the pyruvate, phosphate/water dikinase regulatory protein family. PSRP subfamily.

The catalysed reaction is [pyruvate, water dikinase] + ADP = [pyruvate, water dikinase]-phosphate + AMP + H(+). It catalyses the reaction [pyruvate, water dikinase]-phosphate + phosphate + H(+) = [pyruvate, water dikinase] + diphosphate. Bifunctional serine/threonine kinase and phosphorylase involved in the regulation of the phosphoenolpyruvate synthase (PEPS) by catalyzing its phosphorylation/dephosphorylation. This is Putative phosphoenolpyruvate synthase regulatory protein from Cupriavidus necator (strain ATCC 17699 / DSM 428 / KCTC 22496 / NCIMB 10442 / H16 / Stanier 337) (Ralstonia eutropha).